The following is a 177-amino-acid chain: Large ribosomal subunit protein uL6 (177 aa).

Residues 151-177 (LRPPEPYKGKGVRYAGENVRRKEGKKK) form a disordered region.

This sequence belongs to the universal ribosomal protein uL6 family. As to quaternary structure, part of the 50S ribosomal subunit.

Its function is as follows. This protein binds to the 23S rRNA, and is important in its secondary structure. It is located near the subunit interface in the base of the L7/L12 stalk, and near the tRNA binding site of the peptidyltransferase center. This chain is Large ribosomal subunit protein uL6, found in Phenylobacterium zucineum (strain HLK1).